The primary structure comprises 395 residues: 8-amino-7-oxononanoate synthase (395 aa).

Arginine 24 contributes to the substrate binding site. 111 to 112 (GF) lines the pyridoxal 5'-phosphate pocket. Histidine 136 is a substrate binding site. Pyridoxal 5'-phosphate is bound by residues serine 184, 209–212 (DDAH), and 240–243 (TLSK). Position 243 is an N6-(pyridoxal phosphate)lysine (lysine 243). Residue threonine 357 coordinates substrate.

This sequence belongs to the class-II pyridoxal-phosphate-dependent aminotransferase family. BioF subfamily. Homodimer. It depends on pyridoxal 5'-phosphate as a cofactor.

The enzyme catalyses 6-carboxyhexanoyl-[ACP] + L-alanine + H(+) = (8S)-8-amino-7-oxononanoate + holo-[ACP] + CO2. The protein operates within cofactor biosynthesis; biotin biosynthesis. In terms of biological role, catalyzes the decarboxylative condensation of pimeloyl-[acyl-carrier protein] and L-alanine to produce 8-amino-7-oxononanoate (AON), [acyl-carrier protein], and carbon dioxide. This Alkaliphilus oremlandii (strain OhILAs) (Clostridium oremlandii (strain OhILAs)) protein is 8-amino-7-oxononanoate synthase.